A 421-amino-acid chain; its full sequence is Adenylosuccinate synthetase (421 aa).

Residues 11 to 17 and 39 to 41 each bind GTP; these read GDEGKGK and GHT. Aspartate 12 (proton acceptor) is an active-site residue. Residues aspartate 12 and glycine 39 each coordinate Mg(2+). IMP is bound by residues 12–15, 37–40, threonine 129, arginine 143, asparagine 219, threonine 234, and arginine 298; these read DEGK and NAGH. The active-site Proton donor is histidine 40. Residue 294–300 participates in substrate binding; the sequence is VTTGRRR. GTP is bound by residues arginine 300, 326–328, and 409–411; these read KLD and GTG.

It belongs to the adenylosuccinate synthetase family. In terms of assembly, homodimer. It depends on Mg(2+) as a cofactor.

The protein resides in the cytoplasm. It catalyses the reaction IMP + L-aspartate + GTP = N(6)-(1,2-dicarboxyethyl)-AMP + GDP + phosphate + 2 H(+). The protein operates within purine metabolism; AMP biosynthesis via de novo pathway; AMP from IMP: step 1/2. Its function is as follows. Plays an important role in the de novo pathway and in the salvage pathway of purine nucleotide biosynthesis. Catalyzes the first committed step in the biosynthesis of AMP from IMP. The polypeptide is Adenylosuccinate synthetase (Paracoccidioides brasiliensis (strain Pb03)).